The following is a 129-amino-acid chain: MDKLHLEIVTPQGQVFSDDVSSVVLPGSEGEFGVLPNHASLISLLKAGIIDIEDKNKNHDIVAINWGYAKIDEGKVVILADGAVYVAGNSESELANSLDQAKRLIESMSSDTNAFAATIAKMENVVRAR.

It belongs to the ATPase epsilon chain family. F-type ATPases have 2 components, CF(1) - the catalytic core - and CF(0) - the membrane proton channel. CF(1) has five subunits: alpha(3), beta(3), gamma(1), delta(1), epsilon(1). CF(0) has three main subunits: a, b and c.

It is found in the cell inner membrane. Functionally, produces ATP from ADP in the presence of a proton gradient across the membrane. The chain is ATP synthase epsilon chain from Campylobacter curvus (strain 525.92).